The sequence spans 750 residues: Photosystem I P700 chlorophyll a apoprotein A1 (750 aa).

The next 8 helical transmembrane spans lie at 70-93 (VFSA…FHGA), 156-179 (LYCT…FHYH), 195-219 (LNHH…HVSL), 291-309 (TAHH…GHMY), 346-369 (WHAQ…HHMY), 385-411 (LSLF…IFMV), 433-455 (AIVS…LYIH), and 531-549 (FLVH…LILL). Residues Cys-573 and Cys-582 each coordinate [4Fe-4S] cluster. Transmembrane regions (helical) follow at residues 589-610 (HVFL…HFSW) and 664-686 (LSAY…MFLF). Residue His-675 participates in chlorophyll a' binding. 2 residues coordinate chlorophyll a: Met-683 and Tyr-691. Trp-692 is a phylloquinone binding site. A helical membrane pass occupies residues 724–744 (AVGVAHYLLGGIVTTWAFFLA).

Belongs to the PsaA/PsaB family. In terms of assembly, the PsaA/B heterodimer binds the P700 chlorophyll special pair and subsequent electron acceptors. PSI consists of a core antenna complex that captures photons, and an electron transfer chain that converts photonic excitation into a charge separation. The eukaryotic PSI reaction center is composed of at least 11 subunits. Requires P700 is a chlorophyll a/chlorophyll a' dimer, A0 is one or more chlorophyll a, A1 is one or both phylloquinones and FX is a shared 4Fe-4S iron-sulfur center. as cofactor.

The protein localises to the plastid. It is found in the chloroplast thylakoid membrane. It catalyses the reaction reduced [plastocyanin] + hnu + oxidized [2Fe-2S]-[ferredoxin] = oxidized [plastocyanin] + reduced [2Fe-2S]-[ferredoxin]. PsaA and PsaB bind P700, the primary electron donor of photosystem I (PSI), as well as the electron acceptors A0, A1 and FX. PSI is a plastocyanin-ferredoxin oxidoreductase, converting photonic excitation into a charge separation, which transfers an electron from the donor P700 chlorophyll pair to the spectroscopically characterized acceptors A0, A1, FX, FA and FB in turn. Oxidized P700 is reduced on the lumenal side of the thylakoid membrane by plastocyanin. The polypeptide is Photosystem I P700 chlorophyll a apoprotein A1 (Pinus koraiensis (Korean pine)).